A 468-amino-acid polypeptide reads, in one-letter code: Tyrosine-protein phosphatase YopH (468 aa).

Residues 127 to 194 are disordered; that stretch reads ARGHVSSHSH…TVSPYGPEAR (68 aa). Residues 130–140 are compositionally biased toward low complexity; sequence HVSSHSHSVLH. The Tyrosine-protein phosphatase domain occupies 152–461; that stretch reads SHLDPRTPPL…DVLIKLAEGQ (310 aa). The active-site Phosphocysteine intermediate is the Cys-403.

The protein belongs to the protein-tyrosine phosphatase family. Non-receptor class subfamily. In terms of assembly, monomer.

The protein localises to the secreted. It catalyses the reaction O-phospho-L-tyrosyl-[protein] + H2O = L-tyrosyl-[protein] + phosphate. Essential virulence determinant. This protein is a protein tyrosine phosphatase. The essential function of YopH in Yersinia pathogenesis is host-protein dephosphorylation. It contributes to the ability of the bacteria to resist phagocytosis by peritoneal macrophages. The polypeptide is Tyrosine-protein phosphatase YopH (yopH) (Yersinia enterocolitica).